Consider the following 323-residue polypeptide: MDLTSWAIFPLLLASIGVYGLYKLLQKLRSGAYLQAAVVVITGATSGLGKECAKVFYAAGSHLVLCGRDEERLKDLVQELNNMRLKSTQLHKPHMVIFDLSDVEAVNTAAKEILHLAGRVDILINNAGISYRGTILDTKVSVDRMVMDTNYFGPVALTKALLPSMIKNRRGHVVVISSVQGKISIPFRSAYSASKHATQAFFDCLRAEMSPYDIDVTVVNPGYIKTNLSLNAVTGDGSGYGVMDKNTADGRTPEEVAQTVLRAVGERRKELLVAGLVPTLAVYLRTLAPTLFFSIMSARAKKRTKAKGFITNSNLKAKITVCI.

Residues 1–4 are Cytoplasmic-facing; it reads MDLT. Residues 5–25 traverse the membrane as a helical; Signal-anchor for type II membrane protein segment; it reads SWAIFPLLLASIGVYGLYKLL. The Lumenal portion of the chain corresponds to 26–272; it reads QKLRSGAYLQ…AVGERRKELL (247 aa). Ser-46 and Leu-48 together coordinate NAD(+). Ser-178 provides a ligand contact to substrate. NAD(+) is bound by residues Tyr-191, Lys-195, and Thr-226. The active-site Proton acceptor is Tyr-191.

It belongs to the short-chain dehydrogenases/reductases (SDR) family.

It localises to the endoplasmic reticulum membrane. Functionally, putative oxidoreductase. This is Dehydrogenase/reductase SDR family member 7B (dhrs7b) from Xenopus laevis (African clawed frog).